The chain runs to 278 residues: MGIRKLKPTTQSSRYYSVLDFKEITEVVPYKPLTANISYKAGRDNKGRIAVRRKGGRNKRKFRIIDFKRNKFGIPATVKTIEYDPNRSAFIALVCYADGEYRYILAPNGLKVGDKIESGPAAEIKLGNTLPLDKIPAGTNVHNIELHIGKGGQIARTAGSFAVISAKDGDYVSLKLPSSEIRKVRKECLATIGELSNKDHNLVIIGKAGRNRWLGKRPKVRGVVMNPVDHPLGGGEGRTSGGRHPVTPWGKPTKGFKTRKTRPSDRFIVQRRKKNRNR.

The disordered stretch occupies residues valine 224–arginine 262.

Belongs to the universal ribosomal protein uL2 family. Part of the 50S ribosomal subunit. Forms a bridge to the 30S subunit in the 70S ribosome.

Its function is as follows. One of the primary rRNA binding proteins. Required for association of the 30S and 50S subunits to form the 70S ribosome, for tRNA binding and peptide bond formation. It has been suggested to have peptidyltransferase activity; this is somewhat controversial. Makes several contacts with the 16S rRNA in the 70S ribosome. The polypeptide is Large ribosomal subunit protein uL2 (Leptospira biflexa serovar Patoc (strain Patoc 1 / Ames)).